Reading from the N-terminus, the 280-residue chain is Golgi phosphoprotein 3-like A (280 aa).

The tract at residues 1–32 (MTTLIRRGRRAEEGQERRADSEDSIKDKDEEE) is disordered. Residues 10–32 (RAEEGQERRADSEDSIKDKDEEE) show a composition bias toward basic and acidic residues. A 1,2-diacyl-sn-glycero-3-phospho-(1D-myo-inositol 4-phosphate) is bound by residues Trp62, Arg71, Arg152, and Arg155. The interval 171–182 (EKQNFLLFDMTT) is beta-hairpin required for oligomerization.

The protein belongs to the GOLPH3/VPS74 family. As to quaternary structure, homooligomer.

The protein localises to the golgi apparatus. It is found in the golgi stack membrane. Its subcellular location is the trans-Golgi network membrane. In terms of biological role, phosphatidylinositol-4-phosphate-binding protein that may play a role in the process of vesicle budding at the Golgi and anterograde transport to the plasma membrane. The protein is Golgi phosphoprotein 3-like A (golph3l-a) of Xenopus laevis (African clawed frog).